Consider the following 660-residue polypeptide: Peroxisomal acyl-coenzyme A oxidase 1 (660 aa).

Ser-26 carries the post-translational modification Phosphoserine. 2 positions are modified to N6-succinyllysine: Lys-89 and Lys-90. Positions 139 and 178 each coordinate FAD. Lys-216 is modified (N6-acetyllysine). At Lys-241 the chain carries N6-succinyllysine. N6-acetyllysine occurs at positions 255, 267, and 272. Residue Lys-349 is modified to N6-succinyllysine. The active-site Proton acceptor is Glu-421. Lys-437 and Lys-446 each carry N6-acetyllysine; alternate. Residues Lys-437 and Lys-446 each carry the N6-succinyllysine; alternate modification. N6-acetyllysine occurs at positions 500 and 504. Lys-512 bears the N6-acetyllysine; alternate mark. N6-succinyllysine; alternate is present on Lys-512. Lys-542 is subject to N6-succinyllysine. Position 637 is an N6-acetyllysine; alternate (Lys-637). Lys-637 carries the post-translational modification N6-succinyllysine; alternate. Position 643 is an N6-succinyllysine (Lys-643). Ser-649 carries the post-translational modification Phosphoserine. At Lys-651 the chain carries N6-acetyllysine. Lys-654 bears the N6-succinyllysine mark. The Microbody targeting signal motif lies at 658-660; that stretch reads SKL.

This sequence belongs to the acyl-CoA oxidase family. Homodimer. Interacts with LONP2. The cofactor is FAD. As to expression, widely expressed with highest levels of isoform 1 and isoform 2 detected in testis. Isoform 1 is expressed at higher levels than isoform 2 in liver and kidney while isoform 2 levels are higher in brain, lung, muscle, white adipose tissue and testis. Levels are almost equal in heart.

The protein resides in the peroxisome. It carries out the reaction a 2,3-saturated acyl-CoA + O2 = a (2E)-enoyl-CoA + H2O2. It catalyses the reaction hexadecanoyl-CoA + O2 = (2E)-hexadecenoyl-CoA + H2O2. The enzyme catalyses dodecanoyl-CoA + O2 = (2E)-dodecenoyl-CoA + H2O2. The catalysed reaction is octanoyl-CoA + O2 = (2E)-octenoyl-CoA + H2O2. It carries out the reaction decanoyl-CoA + O2 = (2E)-decenoyl-CoA + H2O2. It catalyses the reaction tetradecanoyl-CoA + O2 = (2E)-tetradecenoyl-CoA + H2O2. The enzyme catalyses hexadecanedioyl-CoA + O2 = (2E)-hexadecenedioyl-CoA + H2O2. The catalysed reaction is (5Z,8Z,11Z,14Z,17Z)-eicosapentaenoyl-CoA + O2 = (2E,5Z,8Z,11Z,14Z,17Z)-icosahexaenoyl-CoA + H2O2. It carries out the reaction tetracosanoyl-CoA + O2 = (2E)-tetracosenoyl-CoA + H2O2. It catalyses the reaction glutaryl-CoA + O2 = (2E)-glutaconyl-CoA + H2O2. The enzyme catalyses hexanoyl-CoA + O2 = (2E)-hexenoyl-CoA + H2O2. The catalysed reaction is octadecanoyl-CoA + O2 = (2E)-octadecenoyl-CoA + H2O2. It carries out the reaction (6Z,9Z,12Z,15Z,18Z,21Z)-tetracosahexaenoyl-CoA + O2 = (2E,6Z,9Z,12Z,15Z,18Z,21Z)-tetracosaheptaenoyl-CoA + H2O2. The protein operates within lipid metabolism; peroxisomal fatty acid beta-oxidation. Functionally, involved in the initial and rate-limiting step of peroxisomal beta-oxidation of straight-chain saturated and unsaturated very-long-chain fatty acids. Catalyzes the desaturation of fatty acyl-CoAs such as palmitoyl-CoA (hexadecanoyl-CoA) to 2-trans-enoyl-CoAs ((2E)-enoyl-CoAs) such as (2E)-hexadecenoyl-CoA, and donates electrons directly to molecular oxygen (O(2)), thereby producing hydrogen peroxide (H(2)O(2)). Shows highest activity against medium-chain fatty acyl-CoAs. Shows optimum activity with a chain length of 10 carbons (decanoyl-CoA) in vitro. In terms of biological role, is active against a much broader range of substrates and shows activity towards long-chain fatty acyl-CoAs. This chain is Peroxisomal acyl-coenzyme A oxidase 1, found in Homo sapiens (Human).